The chain runs to 89 residues: Small ribosomal subunit protein bS18 (89 aa).

A compositionally biased stretch (low complexity) spans 1 to 15; sequence MTTANTNETAAAAAA. A disordered region spans residues 1 to 22; it reads MTTANTNETAAAAAAKNRRNKK.

The protein belongs to the bacterial ribosomal protein bS18 family. Part of the 30S ribosomal subunit. Forms a tight heterodimer with protein bS6.

Binds as a heterodimer with protein bS6 to the central domain of the 16S rRNA, where it helps stabilize the platform of the 30S subunit. This Caldanaerobacter subterraneus subsp. tengcongensis (strain DSM 15242 / JCM 11007 / NBRC 100824 / MB4) (Thermoanaerobacter tengcongensis) protein is Small ribosomal subunit protein bS18.